Here is a 394-residue protein sequence, read N- to C-terminus: Metallophosphoesterase 1 (394 aa).

Residues 27–47 form a helical membrane-spanning segment; the sequence is TVVVISVLLFCEYFIYYLVLF. Residues Asp-74, Asp-116, Asn-154, His-247, His-301, and His-303 each contribute to the a divalent metal cation site. The chain crosses the membrane as a helical span at residues 354-374; sequence TVLTTYCAAAAFLLVLILAHF.

Belongs to the metallophosphoesterase superfamily. MPPE1 family. In terms of assembly, interacts with GPI-anchor proteins (via the GPI portion). Interacts with TMED10. It depends on Mn(2+) as a cofactor.

Its subcellular location is the endoplasmic reticulum-Golgi intermediate compartment membrane. In terms of biological role, metallophosphoesterase that catalyzes the removal of a side-chain ethanolamine-phosphate (EtNP) from the second mannose of the GPI-anchor protein intermediate. Participates in the glycan remodeling steps of GPI-anchor maturation to allow an efficient transport of GPI-anchor proteins from the endoplasmic reticulum to the Golgi. The chain is Metallophosphoesterase 1 from Rattus norvegicus (Rat).